A 174-amino-acid polypeptide reads, in one-letter code: MNYFELFSLLPSYDVDTALLAERYRELQRAVHPDKFANASEQDKRLSVQRTAQINDAFQTLKNPIQRAEHLLTLKGLELSHESTTLKDTQFLMQQMEWRESLEEIKHSDDPDSEIAELYDSFEQYARQITTELKPLLVSELEADHLQAAEQIRKLKFMAKLQDELTRVEDALFD.

Residues 2 to 74 (NYFELFSLLP…IQRAEHLLTL (73 aa)) form the J domain.

It belongs to the HscB family. In terms of assembly, interacts with HscA and stimulates its ATPase activity.

Co-chaperone involved in the maturation of iron-sulfur cluster-containing proteins. Seems to help targeting proteins to be folded toward HscA. This is Co-chaperone protein HscB homolog from Shewanella halifaxensis (strain HAW-EB4).